Here is a 266-residue protein sequence, read N- to C-terminus: Orotidine 5'-phosphate decarboxylase (266 aa).

Substrate is bound by residues Asp-38, 60-62 (KTH), 92-101 (DRKFADIGNT), Tyr-218, and Arg-236. Residue Lys-94 is the Proton donor of the active site.

It belongs to the OMP decarboxylase family.

The catalysed reaction is orotidine 5'-phosphate + H(+) = UMP + CO2. Its pathway is pyrimidine metabolism; UMP biosynthesis via de novo pathway; UMP from orotate: step 2/2. This is Orotidine 5'-phosphate decarboxylase (URA3) from Candida maltosa (Yeast).